Reading from the N-terminus, the 450-residue chain is Bifunctional apoptosis regulator (450 aa).

Positions 1–20 (MEEPQKSYVNTMDLERDEPL) are disordered. The Cytoplasmic portion of the chain corresponds to 1 to 140 (MEEPQKSYVN…PNTGRANQQM (140 aa)). The segment at 34-74 (CHCCYDILVNPTTLNCGHSFCRHCLALWWASSKKTECPECR) adopts an RING-type zinc-finger fold. A helical membrane pass occupies residues 141 to 161 (GGGFFSGVLTALTGVAVVLLV). Topologically, residues 162–331 (YHWSSRESEH…KEPTWKQWRE (170 aa)) are lumenal. The SAM domain maps to 182–249 (WTAEEVVLWL…LMELERVKAL (68 aa)). Asparagine 232 carries an N-linked (GlcNAc...) asparagine glycan. Residues 332-352 (FLVKYSFLPYQLIAEFAWDWL) form a helical membrane-spanning segment. Topologically, residues 353–360 (EVHYWTSR) are cytoplasmic. A helical transmembrane segment spans residues 361–381 (FLIINAMLLSVLELFSFWRIW). The Lumenal portion of the chain corresponds to 382 to 404 (SRSELKTVPQRMWSHFWKVSTQG). A helical transmembrane segment spans residues 405–425 (LFVAMFWPLIPQFVCNCLFYW). Over 426 to 450 (ALYFNPIINIDLVVKELRRLETQVL) the chain is Cytoplasmic.

Interacts with CASP8, BCL2 and BCL2L1 through SAM domain and also with HIP1, IFT57, ESRRBL1 and BCAP31. Interacts with NGFR; this interaction inhibits NF-kappa-B and JNK-related signaling pathways. In terms of processing, mediates RING-dependent self-ubiquitination leading to proteasomal degradation. In terms of tissue distribution, expressed highly in brain, moderately in small intestine, weakly in testes and only faintly in liver and skeletal muscle. Not expressed in heart, kidney, lung and spleen.

It is found in the endoplasmic reticulum membrane. The enzyme catalyses S-ubiquitinyl-[E2 ubiquitin-conjugating enzyme]-L-cysteine + [acceptor protein]-L-lysine = [E2 ubiquitin-conjugating enzyme]-L-cysteine + N(6)-ubiquitinyl-[acceptor protein]-L-lysine.. In terms of biological role, membrane-bound E3 ubiquitin ligase that plays a role in several processes including apoptosis regulation or reticulum endoplasmic stress. Has anti-apoptotic activity, both for apoptosis triggered via death-receptors and via mitochondrial factors. Contributes to the dynamic control of IRE1/ERN1 signaling during ER stress by inducing BAX inhibitor 1/TMBIM6 proteasomal degradation. Promotes the activation of TGF-beta signaling by mediating the 'Lys-63'-linked ubiquitination of TGFBR1 which is critical to activate the pathway. Together with NGFR, negatively regulates NF-kappa-B and JNK-related signaling pathways. Promotes the proteasome-mediated degradation of PNPLA3, a protein involveld in lipid metabolism. In Homo sapiens (Human), this protein is Bifunctional apoptosis regulator (BFAR).